The sequence spans 71 residues: MIIAFIRLYQYCLSPFLGPSCRFSPSCSHYACEALARHGATRGLVLSVWRIMRCNPWSRGGYDPVPAEPFR.

Belongs to the UPF0161 family.

It localises to the cell inner membrane. Functionally, could be involved in insertion of integral membrane proteins into the membrane. The sequence is that of Putative membrane protein insertion efficiency factor from Nitrosospira multiformis (strain ATCC 25196 / NCIMB 11849 / C 71).